A 600-amino-acid chain; its full sequence is Transcription factor rlmA (600 aa).

The 61-residue stretch at 1-61 folds into the MADS-box domain; sequence MGRRKIEIKA…KKLYEFSSCD (61 aa). Disordered stretches follow at residues 71–518 and 544–600; these read YYGP…NIET and GFGR…KSKT. Basic and acidic residues predominate over residues 75–89; that stretch reads PHEHKGPEDFNGKRD. Residues 151 to 160 show a composition bias toward polar residues; it reads PQPQGASRPS. The span at 222–242 shows a compositional bias: pro residues; that stretch reads QPLPPHAIPPHPMPQPVPPHH. Low complexity predominate over residues 243–260; that stretch reads QAPQHLPQHPHPLAQQTP. The span at 328–339 shows a compositional bias: polar residues; the sequence is HQRSLSSKSRSI. Basic and acidic residues predominate over residues 364–384; the sequence is PRTESADVKAEAKQNDSKEIK. Residues 386 to 397 show a composition bias toward pro residues; it reads PAQPVAPPPPPR. A compositionally biased stretch (low complexity) spans 440 to 452; it reads RGSATADSSSSTG. Polar residues predominate over residues 453-468; it reads NQTVTPAKANPDTNHS. Residues 490–501 show a composition bias toward pro residues; that stretch reads PPNPFARPPPPG. Over residues 503-515 the composition is skewed to low complexity; sequence ASQNSNAYNSNNN.

It belongs to the MEF2 family. As to quaternary structure, interacts with hsp90. In terms of processing, phosphorylation during asexual development.

The protein resides in the nucleus. Its function is as follows. Transcription factor; part of cell wall integrity (CWI) signaling pathway composed of pkcA, the bck1-mkk2-mpka MAPK cascade and the downstream rlmA transcription regulator. The CWI signaling pathway regulates cell wall integrity and pyomelanin formation. CWI also controls oxidative stress response, gliotoxin production, iron adaptation and asexual development. Finally, CWI is constitutively required for A.fumigatus to cope with the temperature increase found in the mammalian lung environment, during infection. Positively regulates the phosphorylation of mpkA. Involved in tolerance to oxidative damage and transcriptional regulation of genes related to oxidative stress adaptation. Directly regulates the expression of regulators of conidiation, including flbB, flbC, brlA, abaA, and rasB, as well as genes involved in cell wall synthesis and remodeling. Specifically associates with the target fumiquinazoline (fmq) cluster genes promoters at conserved motifs (5'-TAWWWWTA-3') during conidiation to supplement mature conidia with fumiquinazoline C. Also controls the DHN-melanin production via binding the promoter of pksP. This Aspergillus fumigatus (strain ATCC MYA-4609 / CBS 101355 / FGSC A1100 / Af293) (Neosartorya fumigata) protein is Transcription factor rlmA.